The primary structure comprises 92 residues: C-C motif chemokine 4 (92 aa).

An N-terminal signal peptide occupies residues 1–23; the sequence is MKLCVSALSLLLLVAAFCAPGFS. Intrachain disulfides connect Cys-34-Cys-58 and Cys-35-Cys-74.

This sequence belongs to the intercrine beta (chemokine CC) family. In terms of assembly, homodimer.

It is found in the secreted. Monokine with inflammatory and chemokinetic properties. The polypeptide is C-C motif chemokine 4 (Ccl4) (Mus musculus (Mouse)).